We begin with the raw amino-acid sequence, 229 residues long: Cytidylate kinase (229 aa).

15 to 23 (GPAASGKST) serves as a coordination point for ATP.

The protein belongs to the cytidylate kinase family. Type 1 subfamily.

Its subcellular location is the cytoplasm. It catalyses the reaction CMP + ATP = CDP + ADP. The enzyme catalyses dCMP + ATP = dCDP + ADP. This is Cytidylate kinase from Herpetosiphon aurantiacus (strain ATCC 23779 / DSM 785 / 114-95).